The sequence spans 187 residues: MAQERAEHESADQHTTSTGVPHEGQGEPFPPFDSSNFAPLLIWLAISFLLLYALMSKLVLPRIGGILHTRNEKLRSDMHEATALHAQAKEAAALQEKTIADAKAKAIALAQENQAKLRAESDAKQHAVEAELAAKLTAAEARITETKAAAMSNVTAIAQEAASAIVQQFTGKAPDAKKLTAALKAKA.

The span at 1 to 12 shows a compositional bias: basic and acidic residues; sequence MAQERAEHESAD. The tract at residues 1–31 is disordered; sequence MAQERAEHESADQHTTSTGVPHEGQGEPFPP. Residues 40-60 traverse the membrane as a helical segment; that stretch reads LLIWLAISFLLLYALMSKLVL.

It belongs to the ATPase B chain family. In terms of assembly, F-type ATPases have 2 components, F(1) - the catalytic core - and F(0) - the membrane proton channel. F(1) has five subunits: alpha(3), beta(3), gamma(1), delta(1), epsilon(1). F(0) has three main subunits: a(1), b(2) and c(10-14). The alpha and beta chains form an alternating ring which encloses part of the gamma chain. F(1) is attached to F(0) by a central stalk formed by the gamma and epsilon chains, while a peripheral stalk is formed by the delta and b chains.

Its subcellular location is the cell inner membrane. Its function is as follows. F(1)F(0) ATP synthase produces ATP from ADP in the presence of a proton or sodium gradient. F-type ATPases consist of two structural domains, F(1) containing the extramembraneous catalytic core and F(0) containing the membrane proton channel, linked together by a central stalk and a peripheral stalk. During catalysis, ATP synthesis in the catalytic domain of F(1) is coupled via a rotary mechanism of the central stalk subunits to proton translocation. Functionally, component of the F(0) channel, it forms part of the peripheral stalk, linking F(1) to F(0). The b'-subunit is a diverged and duplicated form of b found in plants and photosynthetic bacteria. This is ATP synthase subunit b 2 (atpF2) from Beijerinckia indica subsp. indica (strain ATCC 9039 / DSM 1715 / NCIMB 8712).